The following is a 153-amino-acid chain: Xanthine-guanine phosphoribosyltransferase (153 aa).

5-phospho-alpha-D-ribose 1-diphosphate contacts are provided by residues 37–38 (RG), Arg-69, and 88–96 (DDLVDTGGT). Arg-69 is a binding site for GMP. Position 89 (Asp-89) interacts with Mg(2+). The guanine site is built by Asp-92 and Ile-135. Xanthine contacts are provided by Asp-92 and Ile-135. Residues 92 to 96 (DTGGT) and 134 to 135 (WI) contribute to the GMP site.

Belongs to the purine/pyrimidine phosphoribosyltransferase family. XGPT subfamily. As to quaternary structure, homotetramer. Mg(2+) is required as a cofactor.

It is found in the cell inner membrane. The catalysed reaction is GMP + diphosphate = guanine + 5-phospho-alpha-D-ribose 1-diphosphate. It carries out the reaction XMP + diphosphate = xanthine + 5-phospho-alpha-D-ribose 1-diphosphate. The enzyme catalyses IMP + diphosphate = hypoxanthine + 5-phospho-alpha-D-ribose 1-diphosphate. It functions in the pathway purine metabolism; GMP biosynthesis via salvage pathway; GMP from guanine: step 1/1. Its pathway is purine metabolism; XMP biosynthesis via salvage pathway; XMP from xanthine: step 1/1. Purine salvage pathway enzyme that catalyzes the transfer of the ribosyl-5-phosphate group from 5-phospho-alpha-D-ribose 1-diphosphate (PRPP) to the N9 position of the 6-oxopurines guanine and xanthine to form the corresponding ribonucleotides GMP (guanosine 5'-monophosphate) and XMP (xanthosine 5'-monophosphate), with the release of PPi. To a lesser extent, also acts on hypoxanthine. This chain is Xanthine-guanine phosphoribosyltransferase, found in Proteus mirabilis (strain HI4320).